A 394-amino-acid polypeptide reads, in one-letter code: Isopentenyl-diphosphate delta-isomerase (394 aa).

10–11 (RK) is a binding site for substrate. Residues Thr67, 68-70 (GMT), Ser101, and Asn129 each bind FMN. 101–103 (SQR) serves as a coordination point for substrate. Gln168 contacts substrate. Residue Glu169 coordinates Mg(2+). Residues Lys200, Ser225, Thr230, 279 to 281 (GMR), and 300 to 301 (AL) contribute to the FMN site.

This sequence belongs to the IPP isomerase type 2 family. In terms of assembly, homooctamer. Dimer of tetramers. It depends on FMN as a cofactor. NADPH is required as a cofactor. Requires Mg(2+) as cofactor.

It localises to the cytoplasm. The enzyme catalyses isopentenyl diphosphate = dimethylallyl diphosphate. Functionally, involved in the biosynthesis of isoprenoids. Catalyzes the 1,3-allylic rearrangement of the homoallylic substrate isopentenyl (IPP) to its allylic isomer, dimethylallyl diphosphate (DMAPP). The chain is Isopentenyl-diphosphate delta-isomerase from Pyrococcus furiosus (strain ATCC 43587 / DSM 3638 / JCM 8422 / Vc1).